A 76-amino-acid chain; its full sequence is UPF0270 protein PSPA7_1664 (76 aa).

Belongs to the UPF0270 family.

The sequence is that of UPF0270 protein PSPA7_1664 from Pseudomonas paraeruginosa (strain DSM 24068 / PA7) (Pseudomonas aeruginosa (strain PA7)).